We begin with the raw amino-acid sequence, 386 residues long: 4-hydroxy-3-methylbut-2-en-1-yl diphosphate synthase (flavodoxin) (386 aa).

Residues C289, C292, C324, and E331 each coordinate [4Fe-4S] cluster.

Belongs to the IspG family. Requires [4Fe-4S] cluster as cofactor.

The enzyme catalyses (2E)-4-hydroxy-3-methylbut-2-enyl diphosphate + oxidized [flavodoxin] + H2O + 2 H(+) = 2-C-methyl-D-erythritol 2,4-cyclic diphosphate + reduced [flavodoxin]. It functions in the pathway isoprenoid biosynthesis; isopentenyl diphosphate biosynthesis via DXP pathway; isopentenyl diphosphate from 1-deoxy-D-xylulose 5-phosphate: step 5/6. In terms of biological role, converts 2C-methyl-D-erythritol 2,4-cyclodiphosphate (ME-2,4cPP) into 1-hydroxy-2-methyl-2-(E)-butenyl 4-diphosphate. The chain is 4-hydroxy-3-methylbut-2-en-1-yl diphosphate synthase (flavodoxin) from Nitratidesulfovibrio vulgaris (strain ATCC 29579 / DSM 644 / CCUG 34227 / NCIMB 8303 / VKM B-1760 / Hildenborough) (Desulfovibrio vulgaris).